A 558-amino-acid chain; its full sequence is Putative ABC transporter ATP-binding protein SMU_1934c (558 aa).

ABC transporter domains follow at residues 5 to 246 (IEFK…GIRE) and 295 to 527 (FDIQ…ANLK). ATP-binding positions include 39–46 (GPSGSGKS) and 328–335 (GKNGAGKS).

It belongs to the ABC transporter superfamily.

Its subcellular location is the cell membrane. Probably part of an ABC transporter complex. Responsible for energy coupling to the transport system. This Streptococcus mutans serotype c (strain ATCC 700610 / UA159) protein is Putative ABC transporter ATP-binding protein SMU_1934c (sdcBA).